The chain runs to 219 residues: Ribosome hibernation promotion factor (219 aa).

Belongs to the HPF/YfiA ribosome-associated protein family. Long HPF subfamily. Interacts with 100S ribosomes.

Its subcellular location is the cytoplasm. Functionally, required for dimerization of active 70S ribosomes into 100S ribosomes in stationary phase; 100S ribosomes are translationally inactive and sometimes present during exponential growth. This is Ribosome hibernation promotion factor from Mycobacterium tuberculosis (strain ATCC 25618 / H37Rv).